Consider the following 363-residue polypeptide: Dihydroorotate dehydrogenase (quinone) (363 aa).

FMN contacts are provided by residues 77–81 (AGMDK) and threonine 101. Position 81 (lysine 81) interacts with substrate. 126–130 (NRMGF) provides a ligand contact to substrate. 2 residues coordinate FMN: serine 155 and asparagine 188. Asparagine 188 contributes to the substrate binding site. The active-site Nucleophile is serine 191. Asparagine 193 contributes to the substrate binding site. Residues lysine 234 and threonine 262 each contribute to the FMN site. Residue 263 to 264 (NT) participates in substrate binding. FMN-binding positions include glycine 287, glycine 316, and 337–338 (YT).

This sequence belongs to the dihydroorotate dehydrogenase family. Type 2 subfamily. Monomer. The cofactor is FMN.

It localises to the cell membrane. The catalysed reaction is (S)-dihydroorotate + a quinone = orotate + a quinol. The protein operates within pyrimidine metabolism; UMP biosynthesis via de novo pathway; orotate from (S)-dihydroorotate (quinone route): step 1/1. Its function is as follows. Catalyzes the conversion of dihydroorotate to orotate with quinone as electron acceptor. The sequence is that of Dihydroorotate dehydrogenase (quinone) from Chloroflexus aurantiacus (strain ATCC 29366 / DSM 635 / J-10-fl).